We begin with the raw amino-acid sequence, 248 residues long: Ureidoacrylate amidohydrolase RutB (248 aa).

The active-site Proton acceptor is the aspartate 41. Residue lysine 150 is part of the active site. The active-site Nucleophile is cysteine 183.

The protein belongs to the isochorismatase family. RutB subfamily.

It carries out the reaction (Z)-3-ureidoacrylate + H2O + H(+) = (Z)-3-aminoacrylate + NH4(+) + CO2. The enzyme catalyses (Z)-3-ureidoacrylate + H2O = (Z)-3-aminoacrylate + carbamate + H(+). The catalysed reaction is (Z)-2-methylureidoacrylate + H2O + H(+) = (Z)-2-methylaminoacrylate + NH4(+) + CO2. Its function is as follows. Hydrolyzes ureidoacrylate to form aminoacrylate and carbamate. The carbamate hydrolyzes spontaneously, thereby releasing one of the nitrogen atoms of the pyrimidine ring as ammonia and one of its carbon atoms as CO2. This chain is Ureidoacrylate amidohydrolase RutB, found in Stutzerimonas stutzeri (strain A1501) (Pseudomonas stutzeri).